The following is a 386-amino-acid chain: Aspartate carbamoyltransferase 1, chloroplastic (386 aa).

The N-terminal 39 residues, 1-39 (MTVASMLSSNSMNVGVSNPKMSSKTSACCLLNRPWPSSC), are a transit peptide targeting the chloroplast. Carbamoyl phosphate-binding residues include arginine 132 and threonine 133. Residues arginine 132 and threonine 133 each contribute to the UMP site. Lysine 162 is an L-aspartate binding site. Residues arginine 183, histidine 211, and glutamine 214 each contribute to the carbamoyl phosphate site. Positions 183 and 211 each coordinate UMP. Residues arginine 244 and arginine 306 each contribute to the UMP site. L-aspartate is bound by residues arginine 244 and arginine 306. 2 residues coordinate carbamoyl phosphate: leucine 346 and proline 347.

The protein belongs to the aspartate/ornithine carbamoyltransferase superfamily. ATCase family. As to quaternary structure, homotrimer.

It is found in the plastid. The protein localises to the chloroplast. The catalysed reaction is carbamoyl phosphate + L-aspartate = N-carbamoyl-L-aspartate + phosphate + H(+). The protein operates within pyrimidine metabolism; UMP biosynthesis via de novo pathway; (S)-dihydroorotate from bicarbonate: step 2/3. Its activity is regulated as follows. Feedback inhibited by UMP. Catalyzes the condensation of carbamoyl phosphate and aspartate to form carbamoyl aspartate and inorganic phosphate, the committed step in the de novo pyrimidine nucleotide biosynthesis pathway. The sequence is that of Aspartate carbamoyltransferase 1, chloroplastic (PYRB1) from Pisum sativum (Garden pea).